A 443-amino-acid polypeptide reads, in one-letter code: Mitochondrial distribution and morphology protein 10 (443 aa).

Belongs to the MDM10 family. In terms of assembly, component of the ER-mitochondria encounter structure (ERMES) or MDM complex, composed of MMM1, MDM10, MDM12 and MDM34. Associates with the mitochondrial outer membrane sorting assembly machinery SAM(core) complex.

Its subcellular location is the mitochondrion outer membrane. Functionally, component of the ERMES/MDM complex, which serves as a molecular tether to connect the endoplasmic reticulum and mitochondria. Components of this complex are involved in the control of mitochondrial shape and protein biogenesis and may function in phospholipid exchange. MDM10 is involved in the late assembly steps of the general translocase of the mitochondrial outer membrane (TOM complex). Functions in the TOM40-specific route of the assembly of outer membrane beta-barrel proteins, including the association of TOM40 with the receptor TOM22 and small TOM proteins. Can associate with the SAM(core) complex as well as the MDM12-MMM1 complex, both involved in late steps of the major beta-barrel assembly pathway, that is responsible for biogenesis of all outer membrane beta-barrel proteins. May act as a switch that shuttles between both complexes and channels precursor proteins into the TOM40-specific pathway. Plays a role in mitochondrial morphology and in the inheritance of mitochondria. This chain is Mitochondrial distribution and morphology protein 10, found in Pyricularia oryzae (strain 70-15 / ATCC MYA-4617 / FGSC 8958) (Rice blast fungus).